Reading from the N-terminus, the 591-residue chain is Monoterpene synthase 8, chloroplastic (591 aa).

A chloroplast-targeting transit peptide spans 1–46; the sequence is MSLLLAPPSYFPFRGLRRSTAAKQPPCLRLVKCTADRQSPEAARRS. Mg(2+) is bound by residues Asp-346, Asp-350, and Glu-497. A DDXXD motif motif is present at residues 346–350; it reads DDVYD.

It belongs to the terpene synthase family. Tpsa subfamily. Requires Mg(2+) as cofactor. The cofactor is Mn(2+). Highly expressed in flowers, petals and sepals, but almost undetectable in vegetative organs.

The protein localises to the plastid. It is found in the chloroplast. The catalysed reaction is (2E)-geranyl diphosphate + H2O = (R)-linalool + diphosphate. It carries out the reaction (2E)-geranyl diphosphate + H2O = (S)-linalool + diphosphate. The enzyme catalyses (2E,6E)-farnesyl diphosphate = (S)-beta-bisabolene + diphosphate. It catalyses the reaction (2E,6E)-farnesyl diphosphate = (E,R)-alpha-bisabolene + diphosphate. The catalysed reaction is (2E,6E)-farnesyl diphosphate = (E)-beta-farnesene + diphosphate. It carries out the reaction (2E,6E)-farnesyl diphosphate = beta-sesquiphellandrene + diphosphate. The enzyme catalyses (2E,6E)-farnesyl diphosphate = (1S,5S,6R)-alpha-bergamotene + diphosphate. The protein operates within secondary metabolite biosynthesis; terpenoid biosynthesis. In terms of biological role, sesquiterpene and monoterpene synthase involved in the biosynthesis of volatile compounds present in floral scent. Mediates the conversion of (2E)-geranyl diphosphate (GPP) into linalool, with trace levels of myrcene, limonene and (Z)-beta-ocimene. Also acts as a sesquiterpene synthase by catalyzing the conversion of farnesyl diphosphate (FPP) to alpha-bergamotene and beta-bisabolene and to minor products including alpha-curcumene, cis-alpha-bisabolene, beta-farnesene and beta-sesquiphellandrene, as well as seven other unidentified sesquiterpenes. This chain is Monoterpene synthase 8, chloroplastic, found in Hedychium coronarium (White butterfly ginger-lily).